The chain runs to 356 residues: MTKHIAILRGDGIGPEIVAETVRVLDKFIAQGLDADYEYAPLGGEAYDEYGHPYPEFTQNLCRKADAVLLGAVGSPQYDNLDRPLRPERGLLAIRKDLNLFANLRPAVLYPELANASTLKPEIVAGLDILIVRELTGDIYFGEPRGIRVLENGEHEGYNTMKYSESEIRRIAHVAFQSAQKRSKKVCSVGKANVLETTELWREIFEEIGKQYPDVELSHMYVDNAAMQLVRAPKQFDVIATGNIFGDILSDEASMLTGSIGMLPSASLDENGKGLYEPSHGSAPDIAGQNKANPLATILSLAMLLRYSLNDEARAQQVENSVQKVLQQGLRTGDIYEEGTKLVSCSEMGDAVLAAL.

Positions 95, 105, 133, and 223 each coordinate substrate. Mg(2+) contacts are provided by Asp-223, Asp-247, and Asp-251. 281 to 293 is a binding site for NAD(+); sequence GSAPDIAGQNKAN.

This sequence belongs to the isocitrate and isopropylmalate dehydrogenases family. LeuB type 1 subfamily. In terms of assembly, homodimer. The cofactor is Mg(2+). Mn(2+) serves as cofactor.

The protein resides in the cytoplasm. It carries out the reaction (2R,3S)-3-isopropylmalate + NAD(+) = 4-methyl-2-oxopentanoate + CO2 + NADH. It functions in the pathway amino-acid biosynthesis; L-leucine biosynthesis; L-leucine from 3-methyl-2-oxobutanoate: step 3/4. Its function is as follows. Catalyzes the oxidation of 3-carboxy-2-hydroxy-4-methylpentanoate (3-isopropylmalate) to 3-carboxy-4-methyl-2-oxopentanoate. The product decarboxylates to 4-methyl-2 oxopentanoate. The polypeptide is 3-isopropylmalate dehydrogenase (Neisseria gonorrhoeae (strain ATCC 700825 / FA 1090)).